The sequence spans 91 residues: MSRSIKKGPFVDAHLIKKVDAAVAGKDKKPIKTWSRRSTVLPEFIGLTIAVHNGRQHVPVYINENMVGHKLGEFALTRTFKGHAADKKSKR.

The protein belongs to the universal ribosomal protein uS19 family.

Functionally, protein S19 forms a complex with S13 that binds strongly to the 16S ribosomal RNA. This chain is Small ribosomal subunit protein uS19, found in Bordetella bronchiseptica (strain ATCC BAA-588 / NCTC 13252 / RB50) (Alcaligenes bronchisepticus).